The sequence spans 1226 residues: Double-stranded RNA-specific adenosine deaminase (1226 aa).

At R26 the chain carries Asymmetric dimethylarginine. Residues 133-199 enclose the Z-binding 1 domain; that stretch reads LSIYQDQEQR…GTPPLWKIAV (67 aa). Positions 133–202 are interaction with Z-DNA; the sequence is LSIYQDQEQR…PLWKIAVSTQ (70 aa). Disordered regions lie at residues 208 to 238 and 258 to 286; these read SGVV…TSVS and GVVR…STSA. S285 is subject to Phosphoserine. The Z-binding 2 domain maps to 293-357; that stretch reads FLDMAEIKEK…TTPPIWHLTD (65 aa). Glycyl lysine isopeptide (Lys-Gly) (interchain with G-Cter in SUMO2) cross-links involve residues K384 and K408. Residue K418 forms a Glycyl lysine isopeptide (Lys-Gly) (interchain with G-Cter in SUMO); alternate linkage. K418 is covalently cross-linked (Glycyl lysine isopeptide (Lys-Gly) (interchain with G-Cter in SUMO1); alternate). A Glycyl lysine isopeptide (Lys-Gly) (interchain with G-Cter in SUMO2); alternate cross-link involves residue K418. Position 481 is a phosphoserine (S481). Positions 503–571 constitute a DRBM 1 domain; the sequence is NPISGLLEYA…AMKAMTILLE (69 aa). The span at 574 to 597 shows a compositional bias: basic and acidic residues; sequence KAKDSGKSEESSHYSTEKESEKTA. Positions 574–610 are disordered; it reads KAKDSGKSEESSHYSTEKESEKTAESQTPTPSATSFF. K580 participates in a covalent cross-link: Glycyl lysine isopeptide (Lys-Gly) (interchain with G-Cter in SUMO2). Polar residues predominate over residues 600 to 610; sequence QTPTPSATSFF. Residues T601 and T603 each carry the phosphothreonine modification. Residues S614, S629, and S636 each carry the phosphoserine modification. The DRBM 2 domain maps to 614–682; that stretch reads SPVTTLLECM…AEEAMKALHG (69 aa). The interval 716–725 is N-terminal extension of DRBM 3 and constituent of a bi-partite nuclear localization signal; sequence IGELVRYLNT. Positions 726–794 constitute a DRBM 3 domain; sequence NPVGGLLEYA…ADAALRVLIG (69 aa). Residues 795–801 form a C-terminal extension of DRBM 3 and constituent of a bi-partite nuclear localization signal region; sequence ENEKAER. A Phosphothreonine modification is found at T808. Phosphoserine occurs at positions 814, 823, and 825. K875 is covalently cross-linked (Glycyl lysine isopeptide (Lys-Gly) (interchain with G-Cter in SUMO2)). The A to I editase domain occupies 886 to 1221; it reads SLGTGNRCVK…ISKPQEEKNF (336 aa). H910 is a Zn(2+) binding site. E912 serves as the catalytic Proton donor. The Zn(2+) site is built by C966 and C1036.

In terms of assembly, homodimer. Homodimerization is essential for its catalytic activity. Isoform 5 can form heterodimers with ADARB1/ADAR2. Isoform 1 interacts with ILF2/NF45 and ILF3/NF90. Binding to ILF3/NF90 up-regulates ILF3-mediated gene expression. Isoform 1 and isoform 5 (via DRBM 3 domain) interact with TNPO1. Isoform 5 (via DRBM domains) interacts with XPO5. Isoform 1 and isoform 5 can interact with EIF2AK2/PKR and UPF1. Sumoylation reduces RNA-editing activity. Ubiquitously expressed, highest levels were found in brain and lung. Isoform 5 is expressed at higher levels in astrocytomas as compared to normal brain tissue and expression increases strikingly with the severity of the tumor, being higher in the most aggressive tumors.

The protein resides in the cytoplasm. Its subcellular location is the nucleus. It is found in the nucleolus. It carries out the reaction adenosine in double-stranded RNA + H2O + H(+) = inosine in double-stranded RNA + NH4(+). Catalyzes the hydrolytic deamination of adenosine to inosine in double-stranded RNA (dsRNA) referred to as A-to-I RNA editing. This may affect gene expression and function in a number of ways that include mRNA translation by changing codons and hence the amino acid sequence of proteins since the translational machinery read the inosine as a guanosine; pre-mRNA splicing by altering splice site recognition sequences; RNA stability by changing sequences involved in nuclease recognition; genetic stability in the case of RNA virus genomes by changing sequences during viral RNA replication; and RNA structure-dependent activities such as microRNA production or targeting or protein-RNA interactions. Can edit both viral and cellular RNAs and can edit RNAs at multiple sites (hyper-editing) or at specific sites (site-specific editing). Its cellular RNA substrates include: bladder cancer-associated protein (BLCAP), neurotransmitter receptors for glutamate (GRIA2) and serotonin (HTR2C) and GABA receptor (GABRA3). Site-specific RNA editing of transcripts encoding these proteins results in amino acid substitutions which consequently alters their functional activities. Exhibits low-level editing at the GRIA2 Q/R site, but edits efficiently at the R/G site and HOTSPOT1. Its viral RNA substrates include: hepatitis C virus (HCV), vesicular stomatitis virus (VSV), measles virus (MV), hepatitis delta virus (HDV), and human immunodeficiency virus type 1 (HIV-1). Exhibits either a proviral (HDV, MV, VSV and HIV-1) or an antiviral effect (HCV) and this can be editing-dependent (HDV and HCV), editing-independent (VSV and MV) or both (HIV-1). Impairs HCV replication via RNA editing at multiple sites. Enhances the replication of MV, VSV and HIV-1 through an editing-independent mechanism via suppression of EIF2AK2/PKR activation and function. Stimulates both the release and infectivity of HIV-1 viral particles by an editing-dependent mechanism where it associates with viral RNAs and edits adenosines in the 5'UTR and the Rev and Tat coding sequence. Can enhance viral replication of HDV via A-to-I editing at a site designated as amber/W, thereby changing an UAG amber stop codon to an UIG tryptophan (W) codon that permits synthesis of the large delta antigen (L-HDAg) which has a key role in the assembly of viral particles. However, high levels of ADAR1 inhibit HDV replication. This chain is Double-stranded RNA-specific adenosine deaminase (ADAR), found in Homo sapiens (Human).